Reading from the N-terminus, the 344-residue chain is Anthranilate phosphoribosyltransferase (344 aa).

5-phospho-alpha-D-ribose 1-diphosphate is bound by residues Gly-85, Gly-88 to Asp-89, Thr-93, Asn-95 to Thr-98, Lys-113 to Ser-121, and Ser-125. Gly-85 contributes to the anthranilate binding site. Ser-97 contributes to the Mg(2+) binding site. An anthranilate-binding site is contributed by Asn-116. An anthranilate-binding site is contributed by Arg-171. Asp-229 and Glu-230 together coordinate Mg(2+).

Belongs to the anthranilate phosphoribosyltransferase family. As to quaternary structure, homodimer. Requires Mg(2+) as cofactor.

The enzyme catalyses N-(5-phospho-beta-D-ribosyl)anthranilate + diphosphate = 5-phospho-alpha-D-ribose 1-diphosphate + anthranilate. It participates in amino-acid biosynthesis; L-tryptophan biosynthesis; L-tryptophan from chorismate: step 2/5. In terms of biological role, catalyzes the transfer of the phosphoribosyl group of 5-phosphorylribose-1-pyrophosphate (PRPP) to anthranilate to yield N-(5'-phosphoribosyl)-anthranilate (PRA). The chain is Anthranilate phosphoribosyltransferase from Shewanella amazonensis (strain ATCC BAA-1098 / SB2B).